We begin with the raw amino-acid sequence, 183 residues long: Ribose 1,5-bisphosphate phosphokinase PhnN (183 aa).

6–13 (GPSGAGKD) contacts ATP.

It belongs to the ribose 1,5-bisphosphokinase family.

The catalysed reaction is alpha-D-ribose 1,5-bisphosphate + ATP = 5-phospho-alpha-D-ribose 1-diphosphate + ADP. The protein operates within metabolic intermediate biosynthesis; 5-phospho-alpha-D-ribose 1-diphosphate biosynthesis; 5-phospho-alpha-D-ribose 1-diphosphate from D-ribose 5-phosphate (route II): step 3/3. Functionally, catalyzes the phosphorylation of ribose 1,5-bisphosphate to 5-phospho-D-ribosyl alpha-1-diphosphate (PRPP). The protein is Ribose 1,5-bisphosphate phosphokinase PhnN of Agrobacterium fabrum (strain C58 / ATCC 33970) (Agrobacterium tumefaciens (strain C58)).